Reading from the N-terminus, the 363-residue chain is Spermatogenesis-associated protein 22 (363 aa).

2 stretches are compositionally biased toward polar residues: residues 1-12 and 145-157; these read MKRSLNENSARS and SCPMSSGAQQQKQ. Disordered stretches follow at residues 1 to 51 and 145 to 169; these read MKRS…DNYD and SCPMSSGAQQQKQFGIPEPPNLPRN.

Component of a multiprotein complex with MEIOB and RPA2. Interacts with MEIOB. Interacts with the complex BRME1:HSF2BP:BRCA2. As to expression, expressed in testis.

The protein resides in the chromosome. Its function is as follows. Meiosis-specific protein required for homologous recombination in meiosis I. This is Spermatogenesis-associated protein 22 (SPATA22) from Macaca fascicularis (Crab-eating macaque).